The primary structure comprises 158 residues: Male-specific protein scotti (158 aa).

The interval 24–43 (NVPDGNGDGDGDGDGDGNDA) is disordered. Over residues 30-42 (GDGDGDGDGDGND) the composition is skewed to acidic residues.

This sequence belongs to the male-specific scotti family.

Post-meiotically transcribed gene that has a role in late spermiogenesis; required for actin cone progression during spermatid individualization. This Drosophila virilis (Fruit fly) protein is Male-specific protein scotti.